Consider the following 268-residue polypeptide: Esterase GME11355 (268 aa).

Catalysis depends on charge relay system residues serine 122, aspartate 212, and histidine 240.

This sequence belongs to the LovG family.

Its pathway is secondary metabolite biosynthesis. Esterase; part of the gene cluster that mediates the biosynthesis of dibenzodioxocinones such as pestalotiollide B, a novel class of inhibitors against cholesterol ester transfer protein (CEPT). The biosynthesis initiates from condensation of acetate and malonate units catalyzed by the non-reducing PKS pks8/GME11356. Pks8/GME11356 lacks a thioesterase (TE) domain, which is important to the cyclizing of the third ring of atrochrysone carboxylic acid, and the esterase GME11355 might play the role of TE and catalyzes the cyclization reaction of the C ring. The lactamase-like protein GME11357 (or other beta-lactamases in Pestalotiopsis microspora) probably hydrolyzes the thioester bond between the ACP of pks8/GME11356 and the intermediate to release atrochrysone carboxylic acid, which is spontaneously dehydrates to form endocrocin anthrone. Endocrocin anthrone is further converted to emodin via the endocrocin intermediate. Emodin is then oxidized by several enzymes such as the Baeyer-Villiger oxidase GME11358, the oxidoreductase GME11367, the short chain dehydrogenase/reductase GME11373, as well as by other oxidoreductases from the cluster, to modify the A and C rings and open the B ring, and finally yield monodictyphenone. The prenyltransferase GME11375 may catalyze the addition reaction between the C5 side chains and the carbon bone of dibenzodioxocinones. The remaining biochemical reactions to the final product dibenzodioxocinones should be methylation catalyzed by methyltransferase GME11366 and reduction and lactonization reaction catalyzed by a series of oxidordeuctases. The sequence is that of Esterase GME11355 from Pestalotiopsis microspora.